Consider the following 251-residue polypeptide: CDP-diacylglycerol pyrophosphatase (251 aa).

Residues 4-24 (AGLLFLVMIVIAVVAAGIGYW) traverse the membrane as a helical segment.

Belongs to the Cdh family.

The protein localises to the cell inner membrane. It carries out the reaction a CDP-1,2-diacyl-sn-glycerol + H2O = a 1,2-diacyl-sn-glycero-3-phosphate + CMP + 2 H(+). Its pathway is phospholipid metabolism; CDP-diacylglycerol degradation; phosphatidate from CDP-diacylglycerol: step 1/1. The protein is CDP-diacylglycerol pyrophosphatase of Shigella flexneri.